The following is a 185-amino-acid chain: Large ribosomal subunit protein uL5 (185 aa).

The protein belongs to the universal ribosomal protein uL5 family. Part of the 50S ribosomal subunit; part of the 5S rRNA/L5/L18/L25 subcomplex. Contacts the 5S rRNA and the P site tRNA. Forms a bridge to the 30S subunit in the 70S ribosome.

In terms of biological role, this is one of the proteins that bind and probably mediate the attachment of the 5S RNA into the large ribosomal subunit, where it forms part of the central protuberance. In the 70S ribosome it contacts protein S13 of the 30S subunit (bridge B1b), connecting the 2 subunits; this bridge is implicated in subunit movement. Contacts the P site tRNA; the 5S rRNA and some of its associated proteins might help stabilize positioning of ribosome-bound tRNAs. The protein is Large ribosomal subunit protein uL5 of Rhizobium johnstonii (strain DSM 114642 / LMG 32736 / 3841) (Rhizobium leguminosarum bv. viciae).